A 246-amino-acid polypeptide reads, in one-letter code: 3-deoxy-manno-octulosonate cytidylyltransferase (246 aa).

It belongs to the KdsB family.

The protein resides in the cytoplasm. The catalysed reaction is 3-deoxy-alpha-D-manno-oct-2-ulosonate + CTP = CMP-3-deoxy-beta-D-manno-octulosonate + diphosphate. It functions in the pathway nucleotide-sugar biosynthesis; CMP-3-deoxy-D-manno-octulosonate biosynthesis; CMP-3-deoxy-D-manno-octulosonate from 3-deoxy-D-manno-octulosonate and CTP: step 1/1. It participates in bacterial outer membrane biogenesis; lipopolysaccharide biosynthesis. Functionally, activates KDO (a required 8-carbon sugar) for incorporation into bacterial lipopolysaccharide in Gram-negative bacteria. This chain is 3-deoxy-manno-octulosonate cytidylyltransferase, found in Rickettsia prowazekii (strain Madrid E).